A 326-amino-acid polypeptide reads, in one-letter code: Glyoxylate/hydroxypyruvate reductase B (326 aa).

Catalysis depends on residues arginine 237 and glutamate 266. The Proton donor role is filled by histidine 285.

The protein belongs to the D-isomer specific 2-hydroxyacid dehydrogenase family. GhrB subfamily. Homodimer.

It is found in the cytoplasm. The enzyme catalyses glycolate + NADP(+) = glyoxylate + NADPH + H(+). It catalyses the reaction (R)-glycerate + NAD(+) = 3-hydroxypyruvate + NADH + H(+). It carries out the reaction (R)-glycerate + NADP(+) = 3-hydroxypyruvate + NADPH + H(+). Its function is as follows. Catalyzes the NADPH-dependent reduction of glyoxylate and hydroxypyruvate into glycolate and glycerate, respectively. This Yersinia pestis bv. Antiqua (strain Nepal516) protein is Glyoxylate/hydroxypyruvate reductase B.